The primary structure comprises 185 residues: Meiotic expression up-regulated protein 31 (185 aa).

This is Meiotic expression up-regulated protein 31 (meu31) from Schizosaccharomyces pombe (strain 972 / ATCC 24843) (Fission yeast).